Here is a 161-residue protein sequence, read N- to C-terminus: Ribosome maturation factor RimP (161 aa).

The protein belongs to the RimP family.

It localises to the cytoplasm. Its function is as follows. Required for maturation of 30S ribosomal subunits. In Rickettsia typhi (strain ATCC VR-144 / Wilmington), this protein is Ribosome maturation factor RimP.